Reading from the N-terminus, the 470-residue chain is UDP-glycosyltransferase 91A1 (470 aa).

Residues Ser290, 350–352 (VEQ), 367–375 (HPGWGTIIE), and 389–392 (VYDQ) each bind UDP-alpha-D-glucose.

The protein belongs to the UDP-glycosyltransferase family.

The polypeptide is UDP-glycosyltransferase 91A1 (UGT91A1) (Arabidopsis thaliana (Mouse-ear cress)).